The sequence spans 240 residues: Phosphoribosylaminoimidazole-succinocarboxamide synthase (240 aa).

The protein belongs to the SAICAR synthetase family.

It catalyses the reaction 5-amino-1-(5-phospho-D-ribosyl)imidazole-4-carboxylate + L-aspartate + ATP = (2S)-2-[5-amino-1-(5-phospho-beta-D-ribosyl)imidazole-4-carboxamido]succinate + ADP + phosphate + 2 H(+). It participates in purine metabolism; IMP biosynthesis via de novo pathway; 5-amino-1-(5-phospho-D-ribosyl)imidazole-4-carboxamide from 5-amino-1-(5-phospho-D-ribosyl)imidazole-4-carboxylate: step 1/2. This Wolbachia sp. subsp. Brugia malayi (strain TRS) protein is Phosphoribosylaminoimidazole-succinocarboxamide synthase.